Consider the following 205-residue polypeptide: Ribosomal RNA large subunit methyltransferase E (205 aa).

S-adenosyl-L-methionine contacts are provided by Gly-60, Trp-62, Asp-80, Asp-96, and Asp-121. The Proton acceptor role is filled by Lys-161.

Belongs to the class I-like SAM-binding methyltransferase superfamily. RNA methyltransferase RlmE family.

The protein resides in the cytoplasm. It catalyses the reaction uridine(2552) in 23S rRNA + S-adenosyl-L-methionine = 2'-O-methyluridine(2552) in 23S rRNA + S-adenosyl-L-homocysteine + H(+). In terms of biological role, specifically methylates the uridine in position 2552 of 23S rRNA at the 2'-O position of the ribose in the fully assembled 50S ribosomal subunit. This is Ribosomal RNA large subunit methyltransferase E from Dechloromonas aromatica (strain RCB).